Here is a 353-residue protein sequence, read N- to C-terminus: Photosystem II protein D1 (353 aa).

At Thr2 the chain carries N-acetylthreonine. Thr2 is subject to Phosphothreonine. 3 helical membrane-spanning segments follow: residues 29 to 46, 118 to 133, and 142 to 156; these read YIGW…TATS, HFLL…EWEL, and WIAV…AATA. Residue His118 coordinates chlorophyll a. Tyr126 is a binding site for pheophytin a. [CaMn4O5] cluster-binding residues include Asp170 and Glu189. Residues 197 to 218 traverse the membrane as a helical segment; the sequence is FHMLGVAGVFGGSLFSAMHGSL. His198 lines the chlorophyll a pocket. A quinone contacts are provided by residues His215 and 264–265; that span reads SF. His215 contributes to the Fe cation binding site. His272 contributes to the Fe cation binding site. The helical transmembrane segment at 274–288 threads the bilayer; the sequence is FLAAWPVVGIWFTAL. The [CaMn4O5] cluster site is built by His332, Glu333, Asp342, and Ala344. A propeptide spanning residues 345 to 353 is cleaved from the precursor; it reads SVEAPSTNG.

The protein belongs to the reaction center PufL/M/PsbA/D family. In terms of assembly, PSII is composed of 1 copy each of membrane proteins PsbA, PsbB, PsbC, PsbD, PsbE, PsbF, PsbH, PsbI, PsbJ, PsbK, PsbL, PsbM, PsbT, PsbX, PsbY, PsbZ, Psb30/Ycf12, at least 3 peripheral proteins of the oxygen-evolving complex and a large number of cofactors. It forms dimeric complexes. Requires The D1/D2 heterodimer binds P680, chlorophylls that are the primary electron donor of PSII, and subsequent electron acceptors. It shares a non-heme iron and each subunit binds pheophytin, quinone, additional chlorophylls, carotenoids and lipids. D1 provides most of the ligands for the Mn4-Ca-O5 cluster of the oxygen-evolving complex (OEC). There is also a Cl(-1) ion associated with D1 and D2, which is required for oxygen evolution. The PSII complex binds additional chlorophylls, carotenoids and specific lipids. as cofactor. In terms of processing, tyr-161 forms a radical intermediate that is referred to as redox-active TyrZ, YZ or Y-Z. Post-translationally, C-terminally processed by CTPA; processing is essential to allow assembly of the oxygen-evolving complex and thus photosynthetic growth.

It localises to the plastid. The protein resides in the chloroplast thylakoid membrane. It carries out the reaction 2 a plastoquinone + 4 hnu + 2 H2O = 2 a plastoquinol + O2. Photosystem II (PSII) is a light-driven water:plastoquinone oxidoreductase that uses light energy to abstract electrons from H(2)O, generating O(2) and a proton gradient subsequently used for ATP formation. It consists of a core antenna complex that captures photons, and an electron transfer chain that converts photonic excitation into a charge separation. The D1/D2 (PsbA/PsbD) reaction center heterodimer binds P680, the primary electron donor of PSII as well as several subsequent electron acceptors. This is Photosystem II protein D1 from Acorus calamus (Sweet flag).